A 312-amino-acid polypeptide reads, in one-letter code: Terpene synthase 8 (312 aa).

The DDxx(x)D/E motif motif lies at 96–101; sequence DDYIYE. The NDxxSxxxD/E motif motif lies at 224-232; that stretch reads NDCGSFKME.

This sequence belongs to the terpene synthase family.

The enzyme catalyses (2E,6E)-farnesyl diphosphate + H2O = discoidol + diphosphate. It functions in the pathway sesquiterpene biosynthesis. In terms of biological role, terpene synthase; part of the gene cluster that mediates the biosynthesis of the trisnorsesquiterpene discodiene which has a function during later stages of multicellular development, during the transition from fingers to Mexican hats. The terpene synthase tps8 converts its substrate farnesyl diphosphate (FDP) into the bicyclic sesquiterpene alcohol discoidol. The cytochrome P450 monooxygenase cyp521A1 then catalyzes the oxidative degradation of discoidol to form the trisnorsesquiterpene discodiene. The protein is Terpene synthase 8 of Dictyostelium discoideum (Social amoeba).